The primary structure comprises 905 residues: uncharacterized protein (905 aa).

4 WD repeats span residues 42–82 (RSLK…FQAV), 86–128 (GYAR…SDPK), 136–175 (STLD…DSVS), and 177–217 (VNTQ…SDNY). Phosphoserine occurs at positions 394 and 397.

It belongs to the WD repeat mio family.

This is an uncharacterized protein from Schizosaccharomyces pombe (strain 972 / ATCC 24843) (Fission yeast).